Consider the following 465-residue polypeptide: UPF0422 protein CBU_0937 (465 aa).

Residues 1 to 23 (MTSKLVISALGLCVSGALSTTLA) form the signal peptide. The stretch at 28 to 60 (TTNQQITKRIDYLQAQINELRTQQKKERQKKKA) forms a coiled coil.

Belongs to the UPF0422 family.

This is UPF0422 protein CBU_0937 from Coxiella burnetii (strain RSA 493 / Nine Mile phase I).